The primary structure comprises 96 residues: UPF0235 protein YggU (96 aa).

The protein belongs to the UPF0235 family.

This Escherichia coli O127:H6 (strain E2348/69 / EPEC) protein is UPF0235 protein YggU.